The chain runs to 410 residues: CRAL-TRIO domain-containing protein F28H7.8 (410 aa).

The 177-residue stretch at 81–257 folds into the CRAL-TRIO domain; sequence FSDARRKHAP…RYGGMIPDIQ (177 aa).

This Caenorhabditis elegans protein is CRAL-TRIO domain-containing protein F28H7.8.